Reading from the N-terminus, the 126-residue chain is C-X-C motif chemokine 9 (126 aa).

Positions 1–21 (MKSAVLFLLGIIFLEQCGVRG) are cleaved as a signal peptide. 2 cysteine pairs are disulfide-bonded: Cys30-Cys57 and Cys32-Cys73. Asn58 is a glycosylation site (N-linked (GlcNAc...) asparagine). A disordered region spans residues 91–126 (KISQKKKQKRGKKHQKNMKNRKPKTPQSRRRSRKTT). Positions 93–126 (SQKKKQKRGKKHQKNMKNRKPKTPQSRRRSRKTT) are enriched in basic residues.

Belongs to the intercrine alpha (chemokine CxC) family.

The protein localises to the secreted. Functionally, may be a cytokine that affects the growth, movement, or activation state of cells that participate in immune and inflammatory response. This Mus musculus (Mouse) protein is C-X-C motif chemokine 9 (Cxcl9).